Consider the following 290-residue polypeptide: Picrinine-N-methytransferase TMT4 (290 aa).

The segment at 71-80 (MLDVGCGIGG) is SAM motif I. A Vacuolar targeting signal motif is present at residues 133 to 139 (DGTFDVV). The segment at 134–142 (GTFDVVFTI) is SAM motif II. The SAM motif III stretch occupies residues 161–170 (VAAPGAAIVI).

The protein belongs to the class I-like SAM-binding methyltransferase superfamily. gTMT family. Homodimer.

It is found in the vacuole membrane. The enzyme catalyses picrinine + S-adenosyl-L-methionine = ervincine + S-adenosyl-L-homocysteine + H(+). The protein operates within alkaloid biosynthesis; vindoline biosynthesis. Functionally, S-adenosyl-L-methionine-dependent N-methyltransferase involved in the biosynthesis of biologically active monoterpenoid indole alkaloids (MIAs) natural products including vindoline. Catalyzes the conversion of picrinine to N-methylpicrinine (ervincine). This chain is Picrinine-N-methytransferase TMT4, found in Catharanthus roseus (Madagascar periwinkle).